Consider the following 131-residue polypeptide: Translation initiation factor 5A (131 aa).

Position 37 is a hypusine (Lys37).

Belongs to the eIF-5A family.

The protein localises to the cytoplasm. Its function is as follows. Functions by promoting the formation of the first peptide bond. This is Translation initiation factor 5A from Methanococcus maripaludis (strain DSM 14266 / JCM 13030 / NBRC 101832 / S2 / LL).